Here is an 82-residue protein sequence, read N- to C-terminus: ATP synthase subunit c (82 aa).

Transmembrane regions (helical) follow at residues 7–27 (AASV…PGIG) and 57–77 (LAFM…LLFA).

The protein belongs to the ATPase C chain family. F-type ATPases have 2 components, F(1) - the catalytic core - and F(0) - the membrane proton channel. F(1) has five subunits: alpha(3), beta(3), gamma(1), delta(1), epsilon(1). F(0) has four main subunits: a(1), b(1), b'(1) and c(10-14). The alpha and beta chains form an alternating ring which encloses part of the gamma chain. F(1) is attached to F(0) by a central stalk formed by the gamma and epsilon chains, while a peripheral stalk is formed by the delta, b and b' chains.

The protein localises to the cellular thylakoid membrane. Functionally, f(1)F(0) ATP synthase produces ATP from ADP in the presence of a proton or sodium gradient. F-type ATPases consist of two structural domains, F(1) containing the extramembraneous catalytic core and F(0) containing the membrane proton channel, linked together by a central stalk and a peripheral stalk. During catalysis, ATP synthesis in the catalytic domain of F(1) is coupled via a rotary mechanism of the central stalk subunits to proton translocation. Its function is as follows. Key component of the F(0) channel; it plays a direct role in translocation across the membrane. A homomeric c-ring of between 10-14 subunits forms the central stalk rotor element with the F(1) delta and epsilon subunits. The chain is ATP synthase subunit c from Synechococcus sp. (strain WH7803).